The primary structure comprises 303 residues: GMP synthase [glutamine-hydrolyzing] subunit B (303 aa).

Residues 1 to 183 (MDVEKFVENA…LGLPKEISER (183 aa)) form the GMPS ATP-PPase domain. 28 to 34 (SGGVDSS) lines the ATP pocket.

As to quaternary structure, heterodimer composed of a glutamine amidotransferase subunit (A) and a GMP-binding subunit (B).

It carries out the reaction XMP + L-glutamine + ATP + H2O = GMP + L-glutamate + AMP + diphosphate + 2 H(+). The protein operates within purine metabolism; GMP biosynthesis; GMP from XMP (L-Gln route): step 1/1. Its function is as follows. Catalyzes the synthesis of GMP from XMP. This Archaeoglobus fulgidus (strain ATCC 49558 / DSM 4304 / JCM 9628 / NBRC 100126 / VC-16) protein is GMP synthase [glutamine-hydrolyzing] subunit B (guaAB).